A 191-amino-acid polypeptide reads, in one-letter code: 3-hydroxyanthranilate 3,4-dioxygenase 2 (191 aa).

O2 is bound at residue Arg-48. The Fe cation site is built by His-52, Glu-73, and His-111. Substrate is bound at residue Glu-73. Residues Arg-115 and Glu-125 each coordinate substrate.

It belongs to the 3-HAO family. Fe(2+) is required as a cofactor.

It localises to the cytoplasm. The catalysed reaction is 3-hydroxyanthranilate + O2 = (2Z,4Z)-2-amino-3-carboxymuconate 6-semialdehyde. The protein operates within cofactor biosynthesis; NAD(+) biosynthesis; quinolinate from L-kynurenine: step 3/3. Functionally, catalyzes the oxidative ring opening of 3-hydroxyanthranilate to 2-amino-3-carboxymuconate semialdehyde, which spontaneously cyclizes to quinolinate. This Aspergillus clavatus (strain ATCC 1007 / CBS 513.65 / DSM 816 / NCTC 3887 / NRRL 1 / QM 1276 / 107) protein is 3-hydroxyanthranilate 3,4-dioxygenase 2 (bna1-2).